The following is a 490-amino-acid chain: Cytochrome P450 2C26 (490 aa).

Cys435 provides a ligand contact to heme.

It belongs to the cytochrome P450 family. It depends on heme as a cofactor.

It localises to the endoplasmic reticulum membrane. The protein resides in the microsome membrane. It catalyses the reaction an organic molecule + reduced [NADPH--hemoprotein reductase] + O2 = an alcohol + oxidized [NADPH--hemoprotein reductase] + H2O + H(+). Its function is as follows. Catalyzes the hydroxylation of tolbutamide and the N-demethylation of aminopyrine and benzphetamine. The polypeptide is Cytochrome P450 2C26 (CYP2C26) (Mesocricetus auratus (Golden hamster)).